We begin with the raw amino-acid sequence, 576 residues long: Lysine--tRNA ligase (576 aa).

Residues glutamate 413 and glutamate 420 each coordinate Mg(2+).

It belongs to the class-II aminoacyl-tRNA synthetase family. Homodimer. Requires Mg(2+) as cofactor.

It localises to the cytoplasm. The catalysed reaction is tRNA(Lys) + L-lysine + ATP = L-lysyl-tRNA(Lys) + AMP + diphosphate. The polypeptide is Lysine--tRNA ligase (Bacteroides thetaiotaomicron (strain ATCC 29148 / DSM 2079 / JCM 5827 / CCUG 10774 / NCTC 10582 / VPI-5482 / E50)).